The primary structure comprises 288 residues: Bifunctional protein FolD (288 aa).

Residues 166–168, serine 191, and isoleucine 232 each bind NADP(+); that span reads GRS.

The protein belongs to the tetrahydrofolate dehydrogenase/cyclohydrolase family. In terms of assembly, homodimer.

The catalysed reaction is (6R)-5,10-methylene-5,6,7,8-tetrahydrofolate + NADP(+) = (6R)-5,10-methenyltetrahydrofolate + NADPH. It catalyses the reaction (6R)-5,10-methenyltetrahydrofolate + H2O = (6R)-10-formyltetrahydrofolate + H(+). Its pathway is one-carbon metabolism; tetrahydrofolate interconversion. In terms of biological role, catalyzes the oxidation of 5,10-methylenetetrahydrofolate to 5,10-methenyltetrahydrofolate and then the hydrolysis of 5,10-methenyltetrahydrofolate to 10-formyltetrahydrofolate. The sequence is that of Bifunctional protein FolD from Rickettsia rickettsii (strain Iowa).